A 373-amino-acid chain; its full sequence is ATP synthase gamma chain 1, chloroplastic (373 aa).

The transit peptide at 1–50 (MACSNLTTMWVSSKPSLSADSSSLSFRSVLKCPTNTSSPPSRASSVSPLQ) directs the protein to the chloroplast. Residue cysteine 139 is part of the active site. Cysteine 249 and cysteine 255 are oxidised to a cystine. Position 347 is a phosphoserine (serine 347).

The protein belongs to the ATPase gamma chain family. As to quaternary structure, F-type ATPases have 2 components, CF(1) - the catalytic core - and CF(0) - the membrane proton channel. CF(1) has five subunits: alpha(3), beta(3), gamma(1), delta(1), epsilon(1). CF(0) has four main subunits: a, b, b' and c. Interacts with PAB.

It is found in the plastid. Its subcellular location is the chloroplast thylakoid membrane. Its function is as follows. Produces ATP from ADP in the presence of a proton gradient across the membrane. The gamma chain is believed to be important in regulating ATPase activity and the flow of protons through the CF(0) complex. This chain is ATP synthase gamma chain 1, chloroplastic (ATPC1), found in Arabidopsis thaliana (Mouse-ear cress).